A 98-amino-acid polypeptide reads, in one-letter code: Aspartyl/glutamyl-tRNA(Asn/Gln) amidotransferase subunit C (98 aa).

The protein belongs to the GatC family. In terms of assembly, heterotrimer of A, B and C subunits.

The catalysed reaction is L-glutamyl-tRNA(Gln) + L-glutamine + ATP + H2O = L-glutaminyl-tRNA(Gln) + L-glutamate + ADP + phosphate + H(+). The enzyme catalyses L-aspartyl-tRNA(Asn) + L-glutamine + ATP + H2O = L-asparaginyl-tRNA(Asn) + L-glutamate + ADP + phosphate + 2 H(+). Allows the formation of correctly charged Asn-tRNA(Asn) or Gln-tRNA(Gln) through the transamidation of misacylated Asp-tRNA(Asn) or Glu-tRNA(Gln) in organisms which lack either or both of asparaginyl-tRNA or glutaminyl-tRNA synthetases. The reaction takes place in the presence of glutamine and ATP through an activated phospho-Asp-tRNA(Asn) or phospho-Glu-tRNA(Gln). The chain is Aspartyl/glutamyl-tRNA(Asn/Gln) amidotransferase subunit C from Bifidobacterium adolescentis (strain ATCC 15703 / DSM 20083 / NCTC 11814 / E194a).